We begin with the raw amino-acid sequence, 670 residues long: Zinc finger protein 233 (670 aa).

The 72-residue stretch at 8 to 79 (VTFKDVAVVF…ETEIQGDGCS (72 aa)) folds into the KRAB domain. The segment at 258–280 (QTSDENGKGLSVGSNLELHQQLH) adopts a C2H2-type 1; degenerate zinc-finger fold. The C2H2-type 2; degenerate zinc-finger motif lies at 311–336 (EKCYRNGDSGEGFSQGSHLQPHQRVS). The C2H2-type 3; degenerate zinc-finger motif lies at 342–364 (YRCQVYARSSNQNSCLPSHELTH). The C2H2-type 4; degenerate zinc-finger motif lies at 370-392 (CTCGRCGKGFHHSLDFDIHCVDS). The segment at 398 to 420 (CKCDVYDKGFSQTSQLQAHQRGH) adopts a C2H2-type 5; degenerate zinc-finger fold. 7 C2H2-type zinc fingers span residues 452 to 474 (YKCE…QRIH), 480 to 502 (YKCD…QRVH), 508 to 530 (YKCD…QRVH), 536 to 558 (YKCE…QQVH), 564 to 586 (YKCD…QRVH), 592 to 614 (YKCE…QRIH), and 620 to 642 (YKCG…QRVH).

Belongs to the krueppel C2H2-type zinc-finger protein family.

It is found in the nucleus. Functionally, may be involved in transcriptional regulation. The polypeptide is Zinc finger protein 233 (ZNF233) (Homo sapiens (Human)).